We begin with the raw amino-acid sequence, 89 residues long: Cornifin-B (89 aa).

Residues 1 to 29 (MSSQQQKQPCTPPPQLQQQQVKQPCQPPP) form a disordered region. Tandem repeats lie at residues 3-14 (SQQQKQPCTPPP), 18-29 (QQQVKQPCQPPP), 31-38 (EPCIPKTK), 39-46 (EPCHPKVP), 47-54 (EPCHPKVP), 55-62 (EPCQPKVP), 63-70 (EPCHPKVP), and 71-78 (EPCPSIVT). Residues 3-29 (SQQQKQPCTPPPQLQQQQVKQPCQPPP) are 2 X 12 AA approximate repeats. Positions 31-78 (EPCIPKTKEPCHPKVPEPCHPKVPEPCQPKVPEPCHPKVPEPCPSIVT) are 6 X 8 AA approximate tandem repeats.

It belongs to the cornifin (SPRR) family. The N-terminus is blocked. Suprabasal layers of squamous-differentiated tissues such as epidermis, esophagus, tongue and trachea.

It localises to the cytoplasm. In terms of biological role, cross-linked envelope protein of keratinocytes. It is a keratinocyte protein that first appears in the cell cytosol, but ultimately becomes cross-linked to membrane proteins by transglutaminase. All that results in the formation of an insoluble envelope beneath the plasma membrane. Can function as both amine donor and acceptor in transglutaminase-mediated cross-linkage. The sequence is that of Cornifin-B (SPRR1B) from Homo sapiens (Human).